The sequence spans 168 residues: MRRIQSIARSPIAIALFMSLAVAGCASKKNLPNNAGDLGLGAGAATPGSSQDFTVNVGDRIFFDLDSSLIRADAQQTLSKQAQWLQRYPQYSITIEGHADERGTREYNLALGQRRAAATRDFLASRGVPTNRMRTISYGNERPVAVCDADTCWSQNRRAVTVLNGAGR.

The N-terminal stretch at 1–24 is a signal peptide; that stretch reads MRRIQSIARSPIAIALFMSLAVAG. A lipid anchor (N-palmitoyl cysteine) is attached at Cys25. Cys25 carries S-diacylglycerol cysteine lipidation. The OmpA-like domain occupies 51–167; that stretch reads QDFTVNVGDR…RAVTVLNGAG (117 aa).

The protein belongs to the Pal lipoprotein family. The Tol-Pal system is composed of five core proteins: the inner membrane proteins TolA, TolQ and TolR, the periplasmic protein TolB and the outer membrane protein Pal. They form a network linking the inner and outer membranes and the peptidoglycan layer. Post-translationally, the N-terminus is blocked.

The protein resides in the cell outer membrane. In terms of biological role, part of the Tol-Pal system, which plays a role in outer membrane invagination during cell division and is important for maintaining outer membrane integrity. This is Peptidoglycan-associated lipoprotein from Brucella abortus biovar 1 (strain 9-941).